Reading from the N-terminus, the 200-residue chain is 3-isopropylmalate dehydratase small subunit (200 aa).

The protein belongs to the LeuD family. LeuD type 1 subfamily. As to quaternary structure, heterodimer of LeuC and LeuD.

The catalysed reaction is (2R,3S)-3-isopropylmalate = (2S)-2-isopropylmalate. It functions in the pathway amino-acid biosynthesis; L-leucine biosynthesis; L-leucine from 3-methyl-2-oxobutanoate: step 2/4. In terms of biological role, catalyzes the isomerization between 2-isopropylmalate and 3-isopropylmalate, via the formation of 2-isopropylmaleate. The sequence is that of 3-isopropylmalate dehydratase small subunit from Erythrobacter litoralis (strain HTCC2594).